Reading from the N-terminus, the 112-residue chain is Putative pterin-4-alpha-carbinolamine dehydratase (112 aa).

The protein belongs to the pterin-4-alpha-carbinolamine dehydratase family.

The catalysed reaction is (4aS,6R)-4a-hydroxy-L-erythro-5,6,7,8-tetrahydrobiopterin = (6R)-L-erythro-6,7-dihydrobiopterin + H2O. The chain is Putative pterin-4-alpha-carbinolamine dehydratase from Shewanella putrefaciens (strain CN-32 / ATCC BAA-453).